Here is a 147-residue protein sequence, read N- to C-terminus: 3-dehydroquinate dehydratase (147 aa).

Catalysis depends on Tyr24, which acts as the Proton acceptor. Residues Asn74, His80, and Asp87 each contribute to the substrate site. Catalysis depends on His100, which acts as the Proton donor. Residues 101–102 (LS) and Arg111 each bind substrate.

Belongs to the type-II 3-dehydroquinase family. In terms of assembly, homododecamer.

The enzyme catalyses 3-dehydroquinate = 3-dehydroshikimate + H2O. The protein operates within metabolic intermediate biosynthesis; chorismate biosynthesis; chorismate from D-erythrose 4-phosphate and phosphoenolpyruvate: step 3/7. Its function is as follows. Catalyzes a trans-dehydration via an enolate intermediate. In Azorhizobium caulinodans (strain ATCC 43989 / DSM 5975 / JCM 20966 / LMG 6465 / NBRC 14845 / NCIMB 13405 / ORS 571), this protein is 3-dehydroquinate dehydratase.